The following is a 235-amino-acid chain: MSRSFRNGFRLLKLSQMDFERAWWDMANLFRAPRRVYRSITLRKQNINRYGREDFSFIVLFSCMIVISALLWALFYMNTPKGYVTTITFMLFVDFGAVGVIMATMYYFIAKRFLMKSNDTILSSTDYQLEWNYCFDVHCNSFFPSFVLLYVIQLFLLPVITRDNFISLFMGNTLYLVALCYYSYLTFIGYQILPFLKNTHALLLPIPMFFIMWALSLLGFNVPKHVVDVYFGKSA.

Residues 1-54 (MSRSFRNGFRLLKLSQMDFERAWWDMANLFRAPRRVYRSITLRKQNINRYGRED) are Cytoplasmic-facing. A helical membrane pass occupies residues 55–75 (FSFIVLFSCMIVISALLWALF). The Lumenal segment spans residues 76-88 (YMNTPKGYVTTIT). Residues 89–109 (FMLFVDFGAVGVIMATMYYFI) form a helical membrane-spanning segment. Topologically, residues 110 to 140 (AKRFLMKSNDTILSSTDYQLEWNYCFDVHCN) are cytoplasmic. The helical transmembrane segment at 141–161 (SFFPSFVLLYVIQLFLLPVIT) threads the bilayer. Residues 162–175 (RDNFISLFMGNTLY) lie on the Lumenal side of the membrane. A helical transmembrane segment spans residues 176 to 196 (LVALCYYSYLTFIGYQILPFL). Over 197–201 (KNTHA) the chain is Cytoplasmic. Residues 202-222 (LLLPIPMFFIMWALSLLGFNV) traverse the membrane as a helical segment. Topologically, residues 223-235 (PKHVVDVYFGKSA) are lumenal.

This sequence belongs to the unc-50 family.

The protein localises to the endoplasmic reticulum membrane. Functionally, has a role in meiosis. The chain is Protein GMH1 homolog (mug16) from Schizosaccharomyces pombe (strain 972 / ATCC 24843) (Fission yeast).